A 473-amino-acid polypeptide reads, in one-letter code: MSNIYIQEPPTNGKVLLKTTAGDIDIELWSKEAPKACRNFIQLCLEAYYDNTIFHRVVPGFIVQGGDPTGTGSGGESIYGAPFKDEFHSRLRFNRRGLVAMANAGSHDNGSQFFFTLGRADELNNKHTIFGKVTGDTVYNMLRLSEVDIDDEERPHNPHKIKSCEVLFNPFDDIIPREIKRPKKEKPEEEVKKLKPKGTKNFSLLSFGEEAEEEEEEVNRVSQSMKGKSKSSHDLLKDDPHLSSVPVVESEKGDAAGDLDDGGEGESAEHDEYIDGDEKNLMRERIAKKLKKDTSANVKSTGEGEVEKKSVNRSEELRKEARQLKRELLAAKQKKVENAAKPAEKRSEEEEATPDGAVAEYRREKQKYEALRKQQSKKGTSREDQTLALLNQFKSKLTQAIAETPENDIPETEVEDDEGWMSHVLQFEDKSRKVKDASMQDSDTFEIYDPRNPVNKRRREESKKLMREKKERR.

Ser2 bears the N-acetylserine mark. The 156-residue stretch at Thr11–Val166 folds into the PPIase cyclophilin-type domain. The span at Arg177 to Lys193 shows a compositional bias: basic and acidic residues. Disordered stretches follow at residues Arg177–Thr386 and Gln399–Arg473. A coiled-coil region spans residues Ser206 to Lys230. The span at Ser231–His241 shows a compositional bias: basic and acidic residues. The segment covering Gly257–Glu266 has biased composition (acidic residues). Basic and acidic residues-rich tracts occupy residues Ser267 to Ala287, Glu305 to Glu348, and Glu360 to Arg372. Positions Glu305–Lys378 form a coiled coil. A Phosphoserine modification is found at Ser347. Over residues Pro405–Gly419 the composition is skewed to acidic residues. 2 stretches are compositionally biased toward basic and acidic residues: residues Gln426–Ser438 and Arg458–Arg473.

This sequence belongs to the cyclophilin-type PPIase family. In terms of assembly, part of the activated spliceosome B/catalytic step 1 spliceosome, one of the forms of the spliceosome which has a well-formed active site but still cannot catalyze the branching reaction and is composed at least of 52 proteins, the U2, U5 and U6 snRNAs and the pre-mRNA. Recruited during early steps of activated spliceosome B maturation, it is probably one of the first proteins released from this complex as he matures to the spliceosome C complex. Component of the minor spliceosome, which splices U12-type introns.

The protein localises to the nucleus. As part of the spliceosome, plays a role in pre-mRNA splicing. Probable inactive PPIase with no peptidyl-prolyl cis-trans isomerase activity. As a component of the minor spliceosome, involved in the splicing of U12-type introns in pre-mRNAs. This is Spliceosome-associated protein CWC27 homolog from Pongo abelii (Sumatran orangutan).